The following is a 466-amino-acid chain: Cysteine--tRNA ligase (466 aa).

C28 contributes to the Zn(2+) binding site. Residues 30 to 40 (PTVYNYIHIGN) carry the 'HIGH' region motif. Residues C208, H233, and E237 each contribute to the Zn(2+) site. The 'KMSKS' region motif lies at 265–269 (KMSKS). K268 provides a ligand contact to ATP.

The protein belongs to the class-I aminoacyl-tRNA synthetase family. Monomer. Zn(2+) is required as a cofactor.

It is found in the cytoplasm. The catalysed reaction is tRNA(Cys) + L-cysteine + ATP = L-cysteinyl-tRNA(Cys) + AMP + diphosphate. This is Cysteine--tRNA ligase from Staphylococcus aureus (strain bovine RF122 / ET3-1).